The primary structure comprises 207 residues: Guanylate kinase (207 aa).

A Guanylate kinase-like domain is found at 5 to 184 (GNLFIVSAPS…ALADLVAIIR (180 aa)). 12–19 (APSGAGKS) is an ATP binding site.

This sequence belongs to the guanylate kinase family.

Its subcellular location is the cytoplasm. The enzyme catalyses GMP + ATP = GDP + ADP. Essential for recycling GMP and indirectly, cGMP. The protein is Guanylate kinase of Shewanella violacea (strain JCM 10179 / CIP 106290 / LMG 19151 / DSS12).